The sequence spans 583 residues: Vivapain-1 (583 aa).

The Cytoplasmic segment spans residues 1-34 (MAQDIKIMNLTKSSLEALNRNQMLSKKSSRKILK). Positions 1–338 (MAQDIKIMNL…SSSGANLLAD (338 aa)) are cleaved as a propeptide — activation peptide. The helical; Signal-anchor for type II membrane protein transmembrane segment at 35 to 55 (ICMYAILTFAMCGVVLICLTA) threads the bilayer. Residues 56 to 583 (MSNSDGSLTQ…IGVEVFYPIL (528 aa)) lie on the Lumenal side of the membrane. Polar residues predominate over residues 62 to 82 (SLTQSGSHNQSGSLKGLSSTP). Disordered regions lie at residues 62 to 83 (SLTQSGSHNQSGSLKGLSSTPG) and 104 to 125 (PHGNRDPTGDDVEKPADAALPN). Asn-70 is a glycosylation site (N-linked (GlcNAc...) asparagine). Basic and acidic residues predominate over residues 106-119 (GNRDPTGDDVEKPA). N-linked (GlcNAc...) asparagine glycans are attached at residues Asn-195 and Asn-272. Intrachain disulfides connect Cys-360/Cys-402, Cys-395/Cys-435, and Cys-420/Cys-440. The active site involves Cys-363. An N-linked (GlcNAc...) asparagine glycan is attached at Asn-381. Residues Asn-486 and Asn-494 are each glycosylated (N-linked (GlcNAc...) asparagine). The cysteines at positions 489 and 572 are disulfide-linked. Residues His-495 and Asn-547 contribute to the active site.

This sequence belongs to the peptidase C1 family.

Its subcellular location is the membrane. Its function is as follows. Cysteine protease. The chain is Vivapain-1 from Plasmodium vivax (strain Salvador I).